The primary structure comprises 244 residues: DNA repair protein RecO (244 aa).

This sequence belongs to the RecO family.

In terms of biological role, involved in DNA repair and RecF pathway recombination. This Caldicellulosiruptor saccharolyticus (strain ATCC 43494 / DSM 8903 / Tp8T 6331) protein is DNA repair protein RecO.